A 404-amino-acid polypeptide reads, in one-letter code: tRNA pseudouridine synthase D (404 aa).

Residue aspartate 79 is the Nucleophile of the active site. The TRUD domain maps to glycine 154–valine 364.

Belongs to the pseudouridine synthase TruD family.

It carries out the reaction uridine(13) in tRNA = pseudouridine(13) in tRNA. Its function is as follows. Responsible for synthesis of pseudouridine from uracil-13 in transfer RNAs. The polypeptide is tRNA pseudouridine synthase D (Geobacter metallireducens (strain ATCC 53774 / DSM 7210 / GS-15)).